The following is a 384-amino-acid chain: PqqA peptide cyclase (384 aa).

Residues 15–231 (PGPPLWLLAE…NQWRDKLAAE (217 aa)) form the Radical SAM core domain. [4Fe-4S] cluster-binding residues include C29, C33, and C36.

It belongs to the radical SAM superfamily. PqqE family. Interacts with PqqD. The interaction is necessary for activity of PqqE. The cofactor is [4Fe-4S] cluster.

It carries out the reaction [PQQ precursor protein] + S-adenosyl-L-methionine = E-Y cross-linked-[PQQ precursor protein] + 5'-deoxyadenosine + L-methionine + H(+). The protein operates within cofactor biosynthesis; pyrroloquinoline quinone biosynthesis. In terms of biological role, catalyzes the cross-linking of a glutamate residue and a tyrosine residue in the PqqA protein as part of the biosynthesis of pyrroloquinoline quinone (PQQ). The protein is PqqA peptide cyclase of Ectopseudomonas mendocina (strain ymp) (Pseudomonas mendocina).